Consider the following 416-residue polypeptide: UDP-N-acetylglucosamine 1-carboxyvinyltransferase (416 aa).

22–23 (KN) serves as a coordination point for phosphoenolpyruvate. UDP-N-acetyl-alpha-D-glucosamine is bound at residue Arg92. Cys116 functions as the Proton donor in the catalytic mechanism. Cys116 is subject to 2-(S-cysteinyl)pyruvic acid O-phosphothioketal. UDP-N-acetyl-alpha-D-glucosamine contacts are provided by residues 121–125 (RPVDQ), Asp304, and Ile326.

Belongs to the EPSP synthase family. MurA subfamily.

Its subcellular location is the cytoplasm. It catalyses the reaction phosphoenolpyruvate + UDP-N-acetyl-alpha-D-glucosamine = UDP-N-acetyl-3-O-(1-carboxyvinyl)-alpha-D-glucosamine + phosphate. It functions in the pathway cell wall biogenesis; peptidoglycan biosynthesis. Cell wall formation. Adds enolpyruvyl to UDP-N-acetylglucosamine. The chain is UDP-N-acetylglucosamine 1-carboxyvinyltransferase from Cupriavidus metallidurans (strain ATCC 43123 / DSM 2839 / NBRC 102507 / CH34) (Ralstonia metallidurans).